A 791-amino-acid chain; its full sequence is Ubiquitin carboxyl-terminal hydrolase 10-A (791 aa).

Polar residues-rich tracts occupy residues 118 to 139 and 270 to 284; these read FSES…SGTG and DTTE…QTLE. 2 disordered regions span residues 118-156 and 270-291; these read FSES…YYSY and DTTE…EDTA. In terms of domain architecture, USP spans 408–788; that stretch reads RGLINKGNWC…TAYLLYYRRV (381 aa). The active-site Nucleophile is Cys-417. The interval 560-580 is disordered; that stretch reads EVNKEEQEGSDEEWEQVGPRN. The active-site Proton acceptor is the His-742.

This sequence belongs to the peptidase C19 family. USP10 subfamily.

It is found in the cytoplasm. The protein resides in the nucleus. The enzyme catalyses Thiol-dependent hydrolysis of ester, thioester, amide, peptide and isopeptide bonds formed by the C-terminal Gly of ubiquitin (a 76-residue protein attached to proteins as an intracellular targeting signal).. Functionally, hydrolase that can remove conjugated ubiquitin from target proteins such as p53/tp53, rps2/us5, rps3/us3, rps10/eS10, becn1, snx3 and cftr. Acts as an essential regulator of p53/tp53 stability: in unstressed cells, specifically deubiquitinates p53/tp53 in the cytoplasm, leading to counteracts MDM2 action and stabilize p53/tp53. Following DNA damage, translocates to the nucleus and deubiquitinates p53/tp53, leading to regulate the p53/TP53-dependent DNA damage response. Component of a regulatory loop that controls autophagy and p53/tp53 levels. Plays a key role in 40S ribosome subunit recycling when a ribosome has stalled during translation: acts both by inhibiting formation of stress granules, which store stalled translation pre-initiation complexes, and mediating deubiquitination of 40S ribosome subunits. Deubiquitinates cftr in early endosomes, enhancing its endocytic recycling. The protein is Ubiquitin carboxyl-terminal hydrolase 10-A (usp10-a) of Xenopus laevis (African clawed frog).